A 102-amino-acid chain; its full sequence is RNA-binding protein Hfq (102 aa).

One can recognise a Sm domain in the interval 9–68; that stretch reads DPFLNALRRERVPVSIYLVNGIKLQGQIESFDQFVILLKNTVSQMVYKHAISTVVPSRPV. Residues 63–102 form a disordered region; the sequence is VPSRPVSHHSNNAGGGSNNYHHSNNAQPSSAASQDSEDAE. The segment covering 70–96 has biased composition (low complexity); the sequence is HHSNNAGGGSNNYHHSNNAQPSSAASQ.

The protein belongs to the Hfq family. In terms of assembly, homohexamer.

Functionally, RNA chaperone that binds small regulatory RNA (sRNAs) and mRNAs to facilitate mRNA translational regulation in response to envelope stress, environmental stress and changes in metabolite concentrations. Also binds with high specificity to tRNAs. The polypeptide is RNA-binding protein Hfq (Cronobacter sakazakii (strain ATCC BAA-894) (Enterobacter sakazakii)).